The primary structure comprises 242 residues: Peptidyl-prolyl cis-trans isomerase FKBP20-2, chloroplastic (242 aa).

A chloroplast-targeting transit peptide spans 1-31 (MVTILSTPLSPRLTFLCETKLSLSRSNRSVC). Residues 32 to 67 (CSLSEEPKDQCLSRRSLVYVLVASPCLLLPALSSSA) constitute a thylakoid transit peptide. The PPIase FKBP-type domain maps to 138 to 225 (GQQVTFHYIG…VFDVELLSIQ (88 aa)). Cysteine 227 and cysteine 241 are oxidised to a cystine.

It belongs to the FKBP-type PPIase family. Interacts in vitro with LTO1.

The protein localises to the plastid. It is found in the chloroplast thylakoid lumen. The catalysed reaction is [protein]-peptidylproline (omega=180) = [protein]-peptidylproline (omega=0). PPIases accelerate the folding of proteins. It catalyzes the cis-trans isomerization of proline imidic peptide bonds in oligopeptides. Involved in the accumulation of the PSII complex. In Arabidopsis thaliana (Mouse-ear cress), this protein is Peptidyl-prolyl cis-trans isomerase FKBP20-2, chloroplastic.